The following is a 475-amino-acid chain: Ankyrin repeat, SAM and basic leucine zipper domain-containing protein 1 (475 aa).

Positions 1 to 25 (MAAGALRGLPVAGGGESSESEDDGW) are disordered. 3 positions are modified to phosphoserine: S17, S18, and S20. ANK repeat units lie at residues 45 to 74 (EKKEKFKKAMTIGDVSLVQELLDSGISVDS), 78 to 107 (YGWTPLMYAASVANAELVRVLLDRGANASF), 110 to 144 (DKQTILITACSAHGSEEQILKCVELLLSRNADPNV), 148 to 177 (RLMTPIMYAARDGHTQVVALLVAHGAEVNT), 181 to 210 (NGYTALTWAARQGHKNIVLKLLELGANKML), and 214 to 243 (DGKMPSEIAKRNKHHEIFNLLSFTLNPLEG). Residues 272–334 (SYTAFGDLEV…KILAALKELQ (63 aa)) form the SAM domain.

Interacts with DDX4, PIWIL1, RANBP9 and TDRD1.

Its subcellular location is the cytoplasm. Functionally, plays a central role during spermatogenesis by repressing transposable elements and preventing their mobilization, which is essential for the germline integrity. Acts via the piRNA metabolic process, which mediates the repression of transposable elements during meiosis by forming complexes composed of piRNAs and Piwi proteins and governs the methylation and subsequent repression of transposons. Its association with pi-bodies suggests a participation in the primary piRNAs metabolic process. Required prior to the pachytene stage to facilitate the production of multiple types of piRNAs, including those associated with repeats involved in the regulation of retrotransposons. May act by mediating protein-protein interactions during germ cell maturation. This Papio anubis (Olive baboon) protein is Ankyrin repeat, SAM and basic leucine zipper domain-containing protein 1 (ASZ1).